Reading from the N-terminus, the 207-residue chain is Holliday junction resolvase RecU (207 aa).

Positions 1–21 are disordered; that stretch reads MTIRYPNGQVYRQPGPTKSKS. Thr87, Asp89, Glu102, and Gln121 together coordinate Mg(2+).

The protein belongs to the RecU family. It depends on Mg(2+) as a cofactor.

It is found in the cytoplasm. It catalyses the reaction Endonucleolytic cleavage at a junction such as a reciprocal single-stranded crossover between two homologous DNA duplexes (Holliday junction).. Functionally, endonuclease that resolves Holliday junction intermediates in genetic recombination. Cleaves mobile four-strand junctions by introducing symmetrical nicks in paired strands. Promotes annealing of linear ssDNA with homologous dsDNA. Required for DNA repair, homologous recombination and chromosome segregation. The sequence is that of Holliday junction resolvase RecU from Lactiplantibacillus plantarum (strain ATCC BAA-793 / NCIMB 8826 / WCFS1) (Lactobacillus plantarum).